We begin with the raw amino-acid sequence, 469 residues long: Chromosomal replication initiator protein DnaA (469 aa).

Positions 1–83 are domain I, interacts with DnaA modulators; the sequence is MSEWDYKIFW…KKISIDFIIK (83 aa). The segment at 83–128 is domain II; it reads KPNTSEDLSKAENEGGNDKKEDAAKPSSAESKKKSVKTEGGRGQHP. Residues 89-131 form a disordered region; it reads DLSKAENEGGNDKKEDAAKPSSAESKKKSVKTEGGRGQHPDLR. The interval 129–344 is domain III, AAA+ region; sequence DLRPEYNFED…AALTKLIAYT (216 aa). Gly173, Gly175, Lys176, and Thr177 together coordinate ATP. The interval 345 to 469 is domain IV, binds dsDNA; it reads ELTKKTMDEA…RNTIKENTNK (125 aa).

The protein belongs to the DnaA family. In terms of assembly, oligomerizes as a right-handed, spiral filament on DNA at oriC.

The protein localises to the cytoplasm. Functionally, plays an essential role in the initiation and regulation of chromosomal replication. ATP-DnaA binds to the origin of replication (oriC) to initiate formation of the DNA replication initiation complex once per cell cycle. Binds the DnaA box (a 9 base pair repeat at the origin) and separates the double-stranded (ds)DNA. Forms a right-handed helical filament on oriC DNA; dsDNA binds to the exterior of the filament while single-stranded (ss)DNA is stabiized in the filament's interior. The ATP-DnaA-oriC complex binds and stabilizes one strand of the AT-rich DNA unwinding element (DUE), permitting loading of DNA polymerase. After initiation quickly degrades to an ADP-DnaA complex that is not apt for DNA replication. Binds acidic phospholipids. The protein is Chromosomal replication initiator protein DnaA of Treponema denticola (strain ATCC 35405 / DSM 14222 / CIP 103919 / JCM 8153 / KCTC 15104).